A 177-amino-acid chain; its full sequence is Thymidine kinase (177 aa).

Position 11–18 (11–18 (GPMFSGKS)) interacts with ATP. E83 serves as the catalytic Proton acceptor. F113 contributes to the substrate binding site. The Zn(2+) site is built by C138 and C141. Residue 157 to 161 (IELIG) coordinates substrate. Zn(2+) contacts are provided by C170 and C173.

The protein belongs to the thymidine kinase family.

The enzyme catalyses thymidine + ATP = dTMP + ADP + H(+). This is Thymidine kinase (TK) from Sheeppox virus (strain KS-1) (SPPV).